A 100-amino-acid chain; its full sequence is Toxin ParE3 (100 aa).

Belongs to the RelE toxin family.

Toxic component of a type II toxin-antitoxin (TA) system. Its toxic effect is neutralized by coexpression with cognate antitoxin ParD3 but no other ParD or RelB antitoxin. This chain is Toxin ParE3 (parE3), found in Caulobacter vibrioides (strain ATCC 19089 / CIP 103742 / CB 15) (Caulobacter crescentus).